The primary structure comprises 574 residues: Phenylalanine--tRNA ligase beta subunit (574 aa).

In terms of domain architecture, B5 spans 278–353 (LTPKEFEVEL…IAYGYNEIEP (76 aa)). The Mg(2+) site is built by Asp-331, Asp-337, Glu-340, and Asp-341.

The protein belongs to the phenylalanyl-tRNA synthetase beta subunit family. Type 2 subfamily. In terms of assembly, tetramer of two alpha and two beta subunits. Mg(2+) is required as a cofactor.

The protein resides in the cytoplasm. The enzyme catalyses tRNA(Phe) + L-phenylalanine + ATP = L-phenylalanyl-tRNA(Phe) + AMP + diphosphate + H(+). This Thermococcus kodakarensis (strain ATCC BAA-918 / JCM 12380 / KOD1) (Pyrococcus kodakaraensis (strain KOD1)) protein is Phenylalanine--tRNA ligase beta subunit.